A 488-amino-acid polypeptide reads, in one-letter code: Mannitol 2-dehydrogenase (488 aa).

37-48 (IVHVGVGGFHRA) is a binding site for NAD(+).

This sequence belongs to the mannitol dehydrogenase family. In terms of assembly, monomer.

The catalysed reaction is D-mannitol + NAD(+) = D-fructose + NADH + H(+). In terms of biological role, catalyzes the NAD(H)-dependent interconversion of D-fructose and D-mannitol in the mannitol metabolic pathway. In Aspergillus niger (strain ATCC MYA-4892 / CBS 513.88 / FGSC A1513), this protein is Mannitol 2-dehydrogenase.